A 335-amino-acid polypeptide reads, in one-letter code: Holliday junction branch migration complex subunit RuvB (335 aa).

The interval 4 to 184 (ADRLIQPTAL…FGIVQRLEFY (181 aa)) is large ATPase domain (RuvB-L). Residues Ile23, Arg24, Gly65, Lys68, Thr69, Thr70, 131–133 (EDY), Arg174, Tyr184, and Arg221 each bind ATP. Thr69 contributes to the Mg(2+) binding site. Residues 185–255 (NIKDLTQIVK…VASAALDMLD (71 aa)) form a small ATPAse domain (RuvB-S) region. The head domain (RuvB-H) stretch occupies residues 258-335 (KEGFDYMDRK…LHFGYDYEPN (78 aa)). Residues Arg294, Arg313, and Arg318 each contribute to the DNA site.

The protein belongs to the RuvB family. In terms of assembly, homohexamer. Forms an RuvA(8)-RuvB(12)-Holliday junction (HJ) complex. HJ DNA is sandwiched between 2 RuvA tetramers; dsDNA enters through RuvA and exits via RuvB. An RuvB hexamer assembles on each DNA strand where it exits the tetramer. Each RuvB hexamer is contacted by two RuvA subunits (via domain III) on 2 adjacent RuvB subunits; this complex drives branch migration. In the full resolvosome a probable DNA-RuvA(4)-RuvB(12)-RuvC(2) complex forms which resolves the HJ.

Its subcellular location is the cytoplasm. The enzyme catalyses ATP + H2O = ADP + phosphate + H(+). The RuvA-RuvB-RuvC complex processes Holliday junction (HJ) DNA during genetic recombination and DNA repair, while the RuvA-RuvB complex plays an important role in the rescue of blocked DNA replication forks via replication fork reversal (RFR). RuvA specifically binds to HJ cruciform DNA, conferring on it an open structure. The RuvB hexamer acts as an ATP-dependent pump, pulling dsDNA into and through the RuvAB complex. RuvB forms 2 homohexamers on either side of HJ DNA bound by 1 or 2 RuvA tetramers; 4 subunits per hexamer contact DNA at a time. Coordinated motions by a converter formed by DNA-disengaged RuvB subunits stimulates ATP hydrolysis and nucleotide exchange. Immobilization of the converter enables RuvB to convert the ATP-contained energy into a lever motion, pulling 2 nucleotides of DNA out of the RuvA tetramer per ATP hydrolyzed, thus driving DNA branch migration. The RuvB motors rotate together with the DNA substrate, which together with the progressing nucleotide cycle form the mechanistic basis for DNA recombination by continuous HJ branch migration. Branch migration allows RuvC to scan DNA until it finds its consensus sequence, where it cleaves and resolves cruciform DNA. The sequence is that of Holliday junction branch migration complex subunit RuvB from Pseudoalteromonas atlantica (strain T6c / ATCC BAA-1087).